The chain runs to 110 residues: MHEMSITQSVVEICEKSAGGRRVLAVTLEIGDLSGVVPDAIEFCFEACTRDTLLEGARLVIERVPGRGECTSCGKEFPVRGYFDPCPACGAYGMRVVSGEELRVKELEVE.

Position 2 (His-2) interacts with Ni(2+). 4 residues coordinate Zn(2+): Cys-70, Cys-73, Cys-86, and Cys-89.

Belongs to the HypA/HybF family.

In terms of biological role, involved in the maturation of [NiFe] hydrogenases. Required for nickel insertion into the metal center of the hydrogenase. This Geobacter metallireducens (strain ATCC 53774 / DSM 7210 / GS-15) protein is Hydrogenase maturation factor HypA.